The primary structure comprises 98 residues: Pancreatic polypeptide prohormone (98 aa).

Positions 1–29 (MAVAYYCLSLFLLSTWVALLLQPLQGAWG) are cleaved as a signal peptide. A Tyrosine amide modification is found at Y65.

This sequence belongs to the NPY family. In terms of processing, no icosapeptide-like peptide is cleaved from the C-terminal.

The protein localises to the secreted. Functionally, hormone secreted by pancreatic cells that acts as a regulator of pancreatic and gastrointestinal functions probably by signaling through the G protein-coupled receptor NPY4R2. The sequence is that of Pancreatic polypeptide prohormone (Ppy) from Rattus norvegicus (Rat).